We begin with the raw amino-acid sequence, 2014 residues long: Leucine-rich repeat serine/threonine-protein kinase 1 (2014 aa).

ANK repeat units follow at residues 51 to 81 (QCPSMEEIHTAYKQRNLSRARDLLRGVCEES), 86 to 116 (EKGQLLSIAAAHGDLETVQFLLTEKRVELPT), 119 to 148 (TDDNPAVVAAHFGHAEVVRELLESLPGPCT), 152 to 182 (LLNWMLALACQRGHLEVVKLLVLTHGADPEN), and 193 to 222 (IVRLPLYAAIKAGNEDIAIFLLRHGAYFCS). LRR repeat units lie at residues 279 to 300 (QITELDLSANCLPSLPSIIPWG), 303 to 324 (NLKKLNLSNNQLGELPCVQSSD), 330 to 351 (RLLEIDISSNKLSHLPPGFLHL), 353 to 374 (KLQKLTASKNYLERLFEEENAT), 381 to 402 (KLQELDLADNRLTELPVQFMHS), 405 to 426 (SLTSLNVSRNNLKSFPDPWSCP), 427 to 447 (LKCCKASKNALESLPDKMAVF), 451 to 472 (HLRDADFSENSLKEVPLGLFQL), 474 to 495 (ALMFLRLQGNQLLSLPPQEKWT), 498 to 519 (QLKTLDLSRNQLGKNEDGLKTK), 549 to 570 (SLEVLCLNDNHLDAVPPSVCLL), 572 to 594 (NLSELYLGNNPGLRELPPELGQL), and 596 to 617 (NLWQLDIEDLNISNVPAEVRKE). The Roc domain occupies 632–826 (KAEKCKLMKM…QLIFHVTCNM (195 aa)). Residues proline 647, arginine 648, glycine 650, lysine 651, serine 652, threonine 653, glutamate 670, histidine 758, aspartate 760, cysteine 806, and lysine 807 each contribute to the GDP site. Positions 840 to 1237 (GRLIPRSYIS…PARLFLENSK (398 aa)) constitute a COR domain. At threonine 1061 the chain carries Phosphothreonine. Phosphoserine occurs at positions 1064 and 1074. Phosphothreonine is present on threonine 1075. The region spanning 1242–1525 (EGENSILGQG…VVSQMKDPTF (284 aa)) is the Protein kinase domain. ATP contacts are provided by residues 1248–1256 (LGQGGSGTV) and lysine 1270. Aspartate 1386 acts as the Proton acceptor in catalysis. WD repeat units follow at residues 1539 to 1579 (AFFS…RMTC), 1582 to 1622 (MKLS…QALD), 1623 to 1668 (TPAV…SCSY), 1693 to 1729 (VKAMEVVNSGSEVWYSNGPGLLVIDCTILDISRRLEP), 1730 to 1778 (YAAP…YFCG), 1779 to 1948 (DPNP…AVLK), and 1950 to 1986 (RELNRHGVLVDAAVVAKDTVVCSFANENTEWCLAVWR). The WD40 loop; involved in dimer stabilization stretch occupies residues 1791-1906 (PSVLETPGSH…MDGETFSQHL (116 aa)). Positions 1839–1895 (SMSSYSSSPPHQDPRSPSSLPSSLTSYSSVPFSANYEDSDRLQEPSVTSDRTEHDLS) are disordered. A compositionally biased stretch (low complexity) spans 1853–1871 (RSPSSLPSSLTSYSSVPFS).

It belongs to the protein kinase superfamily. TKL Ser/Thr protein kinase family. ROCO subfamily. As to quaternary structure, homodimer. The homodimer is autoinhibited and stabilized by its N-terminal residues and ANK repeats. Interacts with CSK. It depends on Mg(2+) as a cofactor. The cofactor is Mn(2+). Autophosphorylated. Autophosphorylation in inhibited in its dimeric state. Phosphorylated by protein kinase C isozymes PRKCA, PRKCB, PRKCG, PRKCE, PRKCZ and PRKCT at Ser-1064, Ser-1074 and Thr-1075. Phosphorylation at these residues activates the kinase activity of LRRK1 to phosphorylate RAB7A. As to expression, expressed in osteoclasts and bone marrow stromal cells.

It localises to the cytoplasm. It is found in the cell membrane. It catalyses the reaction L-seryl-[protein] + ATP = O-phospho-L-seryl-[protein] + ADP + H(+). The catalysed reaction is L-threonyl-[protein] + ATP = O-phospho-L-threonyl-[protein] + ADP + H(+). With respect to regulation, activated by phosphorylation by PKC. Binds both GTP and GDP; binding of GTP stimulates kinase activity. Sterically autoinhibited in its dimeric state. Its function is as follows. Serine/threonine-protein kinase which phosphorylates RAB proteins involved in intracellular trafficking. Phosphorylates RAB7A; this activity is dependent on protein kinase C (PKC) activation. Plays a role in the negative regulation of bone mass, acting through the maturation of osteoclasts. The polypeptide is Leucine-rich repeat serine/threonine-protein kinase 1 (Mus musculus (Mouse)).